Consider the following 31-residue polypeptide: Cytochrome b6-f complex subunit 6 (31 aa).

A helical transmembrane segment spans residues Ile4–Ser26.

This sequence belongs to the PetL family. In terms of assembly, the 4 large subunits of the cytochrome b6-f complex are cytochrome b6, subunit IV (17 kDa polypeptide, PetD), cytochrome f and the Rieske protein, while the 4 small subunits are PetG, PetL, PetM and PetN. The complex functions as a dimer.

Its subcellular location is the plastid. The protein localises to the chloroplast thylakoid membrane. Functionally, component of the cytochrome b6-f complex, which mediates electron transfer between photosystem II (PSII) and photosystem I (PSI), cyclic electron flow around PSI, and state transitions. PetL is important for photoautotrophic growth as well as for electron transfer efficiency and stability of the cytochrome b6-f complex. In Nymphaea alba (White water-lily), this protein is Cytochrome b6-f complex subunit 6.